Reading from the N-terminus, the 559-residue chain is MNLNNEPIRAKRGTALTAKGWVQEAALRMLMNNLDEEVAEHPDQLVVYGGIGKAARNWPSYHSIVSSLTTLDNDETLLIQSGKPVAVFKTHEDAPRVLLANSNLVPAWANWETFHELDKKGLTMYGQMTAGSWIYIGSQGIVQGTYETFAECARQHFGGSLKGTITVTAGLGGMGGAQPLAVTMANGVAICVDVDRSRIDKRMETNYLDIVAHTLTEAIEEAELAKKEGIPLSIGLVGNAAEVLPEMLDRGFVPDIVTDQTSAHDPLNGYLPKGFTNEQGQVLRREDPQAYISLAKKSMAEQVEAMLELKKRGAIVFDYGNNIRQVAFDEGIRDAFSFPGFVPAYIRPQFCEGKGPFRWVALSGDPADIDKTDEVILQEFADNEPLCQWIRMARRHISFQGLPARICWLGYGERARFGKRINEMVASGELSAPIVIGRDHLDAGSVASPNRETEAMKDGSDAVADWPILNALVNTAAGASWVSVHHGGGVGMGYSLHAGMVVVADGTAEAARRLERVLTTDPGLGVVRHADAGYQKAIETAKATGIVIPALAREGKENG.

Residues 49-50 (GG), glutamine 127, 173-175 (GMG), aspartate 193, arginine 198, 239-240 (NA), 260-264 (QTSAH), 270-271 (YL), and tyrosine 319 each bind NAD(+). The active site involves cysteine 407. Glycine 489 contacts NAD(+).

It belongs to the urocanase family. NAD(+) serves as cofactor.

It is found in the cytoplasm. It carries out the reaction 4-imidazolone-5-propanoate = trans-urocanate + H2O. Its pathway is amino-acid degradation; L-histidine degradation into L-glutamate; N-formimidoyl-L-glutamate from L-histidine: step 2/3. In terms of biological role, catalyzes the conversion of urocanate to 4-imidazolone-5-propionate. The chain is Urocanate hydratase from Shouchella clausii (strain KSM-K16) (Alkalihalobacillus clausii).